The primary structure comprises 302 residues: Sulfate adenylyltransferase subunit 2 (302 aa).

A disordered region spans residues 280–302 (RQGRLIDSDQSASMEQKKRQGYF).

Belongs to the PAPS reductase family. CysD subfamily. As to quaternary structure, heterodimer composed of CysD, the smaller subunit, and CysN.

It carries out the reaction sulfate + ATP + H(+) = adenosine 5'-phosphosulfate + diphosphate. It functions in the pathway sulfur metabolism; hydrogen sulfide biosynthesis; sulfite from sulfate: step 1/3. In terms of biological role, with CysN forms the ATP sulfurylase (ATPS) that catalyzes the adenylation of sulfate producing adenosine 5'-phosphosulfate (APS) and diphosphate, the first enzymatic step in sulfur assimilation pathway. APS synthesis involves the formation of a high-energy phosphoric-sulfuric acid anhydride bond driven by GTP hydrolysis by CysN coupled to ATP hydrolysis by CysD. The chain is Sulfate adenylyltransferase subunit 2 from Shewanella baltica (strain OS223).